The sequence spans 238 residues: Ribonuclease PH (238 aa).

Phosphate-binding positions include arginine 86 and 124 to 126 (GTR).

This sequence belongs to the RNase PH family. As to quaternary structure, homohexameric ring arranged as a trimer of dimers.

It carries out the reaction tRNA(n+1) + phosphate = tRNA(n) + a ribonucleoside 5'-diphosphate. Its function is as follows. Phosphorolytic 3'-5' exoribonuclease that plays an important role in tRNA 3'-end maturation. Removes nucleotide residues following the 3'-CCA terminus of tRNAs; can also add nucleotides to the ends of RNA molecules by using nucleoside diphosphates as substrates, but this may not be physiologically important. Probably plays a role in initiation of 16S rRNA degradation (leading to ribosome degradation) during starvation. The chain is Ribonuclease PH from Azorhizobium caulinodans (strain ATCC 43989 / DSM 5975 / JCM 20966 / LMG 6465 / NBRC 14845 / NCIMB 13405 / ORS 571).